We begin with the raw amino-acid sequence, 48 residues long: Cytochrome c oxidase subunit 2 (48 aa).

Residues 1 to 14 lie on the Mitochondrial intermembrane side of the membrane; it reads MAHPAQLGLQDASS. A helical membrane pass occupies residues 15–45; that stretch reads PIXEELLHFHEDALMIVFLISTLVLYIITTT. Topologically, residues 46 to 48 are mitochondrial matrix; that stretch reads VST.

This sequence belongs to the cytochrome c oxidase subunit 2 family. Component of the cytochrome c oxidase (complex IV, CIV), a multisubunit enzyme composed of 14 subunits. The complex is composed of a catalytic core of 3 subunits MT-CO1, MT-CO2 and MT-CO3, encoded in the mitochondrial DNA, and 11 supernumerary subunits COX4I, COX5A, COX5B, COX6A, COX6B, COX6C, COX7A, COX7B, COX7C, COX8 and NDUFA4, which are encoded in the nuclear genome. The complex exists as a monomer or a dimer and forms supercomplexes (SCs) in the inner mitochondrial membrane with NADH-ubiquinone oxidoreductase (complex I, CI) and ubiquinol-cytochrome c oxidoreductase (cytochrome b-c1 complex, complex III, CIII), resulting in different assemblies (supercomplex SCI(1)III(2)IV(1) and megacomplex MCI(2)III(2)IV(2)). Found in a complex with TMEM177, COA6, COX18, COX20, SCO1 and SCO2. Interacts with TMEM177 in a COX20-dependent manner. Interacts with COX20. Interacts with COX16. It depends on Cu cation as a cofactor.

The protein localises to the mitochondrion inner membrane. It catalyses the reaction 4 Fe(II)-[cytochrome c] + O2 + 8 H(+)(in) = 4 Fe(III)-[cytochrome c] + 2 H2O + 4 H(+)(out). Functionally, component of the cytochrome c oxidase, the last enzyme in the mitochondrial electron transport chain which drives oxidative phosphorylation. The respiratory chain contains 3 multisubunit complexes succinate dehydrogenase (complex II, CII), ubiquinol-cytochrome c oxidoreductase (cytochrome b-c1 complex, complex III, CIII) and cytochrome c oxidase (complex IV, CIV), that cooperate to transfer electrons derived from NADH and succinate to molecular oxygen, creating an electrochemical gradient over the inner membrane that drives transmembrane transport and the ATP synthase. Cytochrome c oxidase is the component of the respiratory chain that catalyzes the reduction of oxygen to water. Electrons originating from reduced cytochrome c in the intermembrane space (IMS) are transferred via the dinuclear copper A center (CU(A)) of subunit 2 and heme A of subunit 1 to the active site in subunit 1, a binuclear center (BNC) formed by heme A3 and copper B (CU(B)). The BNC reduces molecular oxygen to 2 water molecules using 4 electrons from cytochrome c in the IMS and 4 protons from the mitochondrial matrix. This is Cytochrome c oxidase subunit 2 (mt-co2) from Polypterus sp. (Bichir).